The sequence spans 471 residues: MKIKTRFAPSPTGYLHVGGARTALYSWLFARNHGGEFVLRIEDTDLERSTPEAIEAIMDGMNWLSLEWDEGPYYQTKRFDRYNAVIDQMLEEGTAYKCYCSKERLEALREEQMAKGEKPRYDGRCRHSHEHHADDEPCVVRFANPQEGSVVFDDQIRGPIEFSNQELDDLIIRRTDGSPTYNFCVVVDDWDMEITHVIRGEDHINNTPRQINILKALKAPVPVYAHVSMINGDDGKKLSKRHGAVSVMQYRDDGYLPEALLNYLVRLGWSHGDQEIFTREEMIKYFTLNAVSKSASAFNTDKLLWLNHHYINALPPEYVATHLQWHIEQENIDTRNGPQLADLVKLLGERCKTLKEMAQSCRYFYEDFAEFDADAAKKHLRPVARQPLEVVRDKLAAITDWTAENVHHAIQATADELEVGMGKVGMPLRVAVTGAGQSPALDVTVHAIGRTRSIERINKALAFIAERENQQ.

Positions 9-19 (PSPTGYLHVGG) match the 'HIGH' region motif. Zn(2+) contacts are provided by Cys98, Cys100, Cys125, and His127. The 'KMSKS' region motif lies at 237-241 (KLSKR). ATP is bound at residue Lys240.

It belongs to the class-I aminoacyl-tRNA synthetase family. Glutamate--tRNA ligase type 1 subfamily. Monomer. Zn(2+) serves as cofactor.

Its subcellular location is the cytoplasm. The enzyme catalyses tRNA(Glu) + L-glutamate + ATP = L-glutamyl-tRNA(Glu) + AMP + diphosphate. Catalyzes the attachment of glutamate to tRNA(Glu) in a two-step reaction: glutamate is first activated by ATP to form Glu-AMP and then transferred to the acceptor end of tRNA(Glu). This is Glutamate--tRNA ligase from Shigella boydii serotype 18 (strain CDC 3083-94 / BS512).